The following is a 235-amino-acid chain: Large ribosomal subunit protein uL1 (235 aa).

Belongs to the universal ribosomal protein uL1 family. Part of the 50S ribosomal subunit.

Binds directly to 23S rRNA. The L1 stalk is quite mobile in the ribosome, and is involved in E site tRNA release. Functionally, protein L1 is also a translational repressor protein, it controls the translation of the L11 operon by binding to its mRNA. The sequence is that of Large ribosomal subunit protein uL1 from Lawsonia intracellularis (strain PHE/MN1-00).